The primary structure comprises 58 residues: Small ribosomal subunit protein bS21 (58 aa).

Residues 37 to 58 are disordered; that stretch reads FYDKPSVKKRAKSKAAAKYRGR. Residues 43–58 are compositionally biased toward basic residues; that stretch reads VKKRAKSKAAAKYRGR.

The protein belongs to the bacterial ribosomal protein bS21 family.

In Chlamydia muridarum (strain MoPn / Nigg), this protein is Small ribosomal subunit protein bS21 (rpsU).